Here is a 279-residue protein sequence, read N- to C-terminus: Pantothenate synthetase (279 aa).

ATP is bound at residue 27–34; sequence MGYLHEGH. The active-site Proton donor is His-34. Position 58 (Gln-58) interacts with (R)-pantoate. Position 58 (Gln-58) interacts with beta-alanine. 144–147 lines the ATP pocket; it reads GKKD. Residue Gln-150 participates in (R)-pantoate binding. ATP is bound by residues Val-173 and 181–184; that span reads MSSR.

Belongs to the pantothenate synthetase family. As to quaternary structure, homodimer.

The protein localises to the cytoplasm. The enzyme catalyses (R)-pantoate + beta-alanine + ATP = (R)-pantothenate + AMP + diphosphate + H(+). It participates in cofactor biosynthesis; (R)-pantothenate biosynthesis; (R)-pantothenate from (R)-pantoate and beta-alanine: step 1/1. Functionally, catalyzes the condensation of pantoate with beta-alanine in an ATP-dependent reaction via a pantoyl-adenylate intermediate. The sequence is that of Pantothenate synthetase from Citrifermentans bemidjiense (strain ATCC BAA-1014 / DSM 16622 / JCM 12645 / Bem) (Geobacter bemidjiensis).